Consider the following 370-residue polypeptide: D-aspartate oxidase (370 aa).

Isoleucine 15, alanine 49, serine 50, glycine 54, valine 166, arginine 317, glycine 346, and glutamine 348 together coordinate FAD. Positions alanine 368–leucine 370 match the Microbody targeting signal motif.

The protein belongs to the DAMOX/DASOX family. In terms of assembly, homotetramer. Requires FAD as cofactor.

Its subcellular location is the peroxisome matrix. It carries out the reaction D-aspartate + O2 + H2O = oxaloacetate + H2O2 + NH4(+). The catalysed reaction is D-glutamate + O2 + H2O = H2O2 + 2-oxoglutarate + NH4(+). With respect to regulation, inhibited by malonate and D-malate. Very mildly inhibited by benzoate, ethylenediaminetetraacetic acid (EDTA), crotonate and anthranilate. May be very mildly inhibited by meso-tartrate. In terms of biological role, selectively catalyzes the oxidative deamination of acidic amino acids. Protects the organism from the toxicity of D-amino acids. Enables the organism to utilize D-amino acids as a source of nutrients. Enables the organism to utilize D-aspartate as a source of nitrogen and carbon. This Vanrija humicola (Yeast) protein is D-aspartate oxidase.